The following is a 186-amino-acid chain: Prorelaxin 1 (186 aa).

The first 22 residues, 1–22, serve as a signal peptide directing secretion; sequence MSSRLLLQLLGFWLFLSQPCRA. 3 disulfides stabilise this stretch: Cys-36/Cys-173, Cys-48/Cys-186, and Cys-172/Cys-177. Residues 58-158 constitute a propeptide, connecting peptide; the sequence is SQEEPAPLAR…LKYLGSDAQS (101 aa). Position 163 is a pyrrolidone carboxylic acid (Gln-163).

This sequence belongs to the insulin family. As to quaternary structure, heterodimer of a B chain and an A chain linked by two disulfide bonds.

Its subcellular location is the secreted. Relaxin is an ovarian hormone that acts with estrogen to produce dilatation of the birth canal in many mammals. This is Prorelaxin 1 (Rln1) from Rattus norvegicus (Rat).